The following is a 290-amino-acid chain: Glycine--tRNA ligase alpha subunit (290 aa).

The protein belongs to the class-II aminoacyl-tRNA synthetase family. In terms of assembly, tetramer of two alpha and two beta subunits.

The protein resides in the cytoplasm. It catalyses the reaction tRNA(Gly) + glycine + ATP = glycyl-tRNA(Gly) + AMP + diphosphate. In Gloeobacter violaceus (strain ATCC 29082 / PCC 7421), this protein is Glycine--tRNA ligase alpha subunit.